The sequence spans 128 residues: Translation initiation factor 5A (128 aa).

Position 35 is a hypusine (Lys-35).

Belongs to the eIF-5A family.

The protein resides in the cytoplasm. Functionally, functions by promoting the formation of the first peptide bond. The chain is Translation initiation factor 5A (eIF5A) from Methanocella arvoryzae (strain DSM 22066 / NBRC 105507 / MRE50).